The sequence spans 476 residues: Bifunctional protein HldE (476 aa).

Residues 1–318 (MKVTLPDFRR…ENAIRGRAET (318 aa)) are ribokinase. 195 to 198 (NLSE) serves as a coordination point for ATP. Residue D264 is part of the active site. A cytidylyltransferase region spans residues 344–476 (MTNGIFDILH…IIQSIKNGLG (133 aa)).

It in the N-terminal section; belongs to the carbohydrate kinase PfkB family. This sequence in the C-terminal section; belongs to the cytidylyltransferase family. Homodimer.

It carries out the reaction D-glycero-beta-D-manno-heptose 7-phosphate + ATP = D-glycero-beta-D-manno-heptose 1,7-bisphosphate + ADP + H(+). The enzyme catalyses D-glycero-beta-D-manno-heptose 1-phosphate + ATP + H(+) = ADP-D-glycero-beta-D-manno-heptose + diphosphate. It participates in nucleotide-sugar biosynthesis; ADP-L-glycero-beta-D-manno-heptose biosynthesis; ADP-L-glycero-beta-D-manno-heptose from D-glycero-beta-D-manno-heptose 7-phosphate: step 1/4. Its pathway is nucleotide-sugar biosynthesis; ADP-L-glycero-beta-D-manno-heptose biosynthesis; ADP-L-glycero-beta-D-manno-heptose from D-glycero-beta-D-manno-heptose 7-phosphate: step 3/4. Functionally, catalyzes the phosphorylation of D-glycero-D-manno-heptose 7-phosphate at the C-1 position to selectively form D-glycero-beta-D-manno-heptose-1,7-bisphosphate. Catalyzes the ADP transfer from ATP to D-glycero-beta-D-manno-heptose 1-phosphate, yielding ADP-D-glycero-beta-D-manno-heptose. In Yersinia enterocolitica serotype O:8 / biotype 1B (strain NCTC 13174 / 8081), this protein is Bifunctional protein HldE.